Here is a 412-residue protein sequence, read N- to C-terminus: MITQLGLTLVVGLTLCLVHVQALLQVPEFPFSVLWNVPSARCKTRFGVHLPLDALGIIANHGQRFHGQNITIFYKNQFGLYPYFGPRGTAHNGGIPQAVSLDHHLAQAAHQILHNLGSSFAGLAVLDWEEWYPLWAGNWGTHRQVYQAASWAWAQQMFPDLNPQEQLHKAQTGFEQAARALMEHTLRLGQMLRPHGLWGFYRYPVCGNGWHNMASNYTGHCHPAIITRNTQLRWLWAASSALFPSIYLPPRLPPAYHQTFVRHRLEEAFRVALTGHAHPLPVLAYVRLTHRSSGRFLSLDDLMQTIGVSAALGAAGVVLWGDLSVSSSEEECWRLHDYLVGTLGPYVINVTKAATACSHQRCHGHGRCSWKDPGQMEAFLHLQPDDNLGAWKSFRCRCYLGWSGPTCLEPKP.

An N-terminal signal peptide occupies residues 1-22 (MITQLGLTLVVGLTLCLVHVQA). Intrachain disulfides connect C42–C332, C206–C221, C357–C368, C362–C396, and C398–C407. N69 carries N-linked (GlcNAc...) asparagine glycosylation. The active-site Proton donor is the E129. A glycan (N-linked (GlcNAc...) asparagine) is linked at N216. Residues 353–408 (AATACSHQRCHGHGRCSWKDPGQMEAFLHLQPDDNLGAWKSFRCRCYLGWSGPTCL) enclose the EGF-like domain.

Belongs to the glycosyl hydrolase 56 family. N-glycosylated.

It is found in the secreted. It localises to the cell membrane. The protein localises to the cytoplasmic vesicle. The protein resides in the secretory vesicle. Its subcellular location is the acrosome. It is found in the endoplasmic reticulum. It localises to the early endosome. The enzyme catalyses Random hydrolysis of (1-&gt;4)-linkages between N-acetyl-beta-D-glucosamine and D-glucuronate residues in hyaluronate.. Its function is as follows. Facilitates sperm penetration into the layer of cumulus cells surrounding the egg by digesting hyaluronic acid. Involved in induction of the acrosome reaction in the sperm. Involved in follicular atresia, the breakdown of immature ovarian follicles that are not selected to ovulate. Induces ovarian granulosa cell apoptosis, possibly via apoptotic signaling pathway involving CASP8 and CASP3 activation, and poly(ADP-ribose) polymerase (PARP) cleavage. Has no hyaluronidase activity in embryonic fibroblasts in vitro. Has no hyaluronidase activity in granulosa cells in vitro. This chain is Hyaluronidase-3 (Hyal3), found in Rattus norvegicus (Rat).